Consider the following 476-residue polypeptide: Bifunctional protein HldE (476 aa).

Residues 1–318 are ribokinase; it reads MKPILPDYNS…AEAVHGSQDT (318 aa). 195 to 198 contributes to the ATP binding site; it reads NMKE. The active site involves Asp264. Residues 344-476 form a cytidylyltransferase region; that stretch reads MTNGCFDILH…IINAIKGGKG (133 aa).

It in the N-terminal section; belongs to the carbohydrate kinase PfkB family. In the C-terminal section; belongs to the cytidylyltransferase family. In terms of assembly, homodimer.

The catalysed reaction is D-glycero-beta-D-manno-heptose 7-phosphate + ATP = D-glycero-beta-D-manno-heptose 1,7-bisphosphate + ADP + H(+). The enzyme catalyses D-glycero-beta-D-manno-heptose 1-phosphate + ATP + H(+) = ADP-D-glycero-beta-D-manno-heptose + diphosphate. It functions in the pathway nucleotide-sugar biosynthesis; ADP-L-glycero-beta-D-manno-heptose biosynthesis; ADP-L-glycero-beta-D-manno-heptose from D-glycero-beta-D-manno-heptose 7-phosphate: step 1/4. The protein operates within nucleotide-sugar biosynthesis; ADP-L-glycero-beta-D-manno-heptose biosynthesis; ADP-L-glycero-beta-D-manno-heptose from D-glycero-beta-D-manno-heptose 7-phosphate: step 3/4. It participates in bacterial outer membrane biogenesis; LPS core biosynthesis. Catalyzes the phosphorylation of D-glycero-D-manno-heptose 7-phosphate at the C-1 position to selectively form D-glycero-beta-D-manno-heptose-1,7-bisphosphate. Its function is as follows. Catalyzes the ADP transfer from ATP to D-glycero-beta-D-manno-heptose 1-phosphate, yielding ADP-D-glycero-beta-D-manno-heptose. The chain is Bifunctional protein HldE from Vibrio parahaemolyticus serotype O3:K6 (strain RIMD 2210633).